Here is a 130-residue protein sequence, read N- to C-terminus: Small ribosomal subunit protein uS9 (130 aa).

The disordered stretch occupies residues 101–130 (AGLLTRDARMKERKKPGLKKARKASQFSKR). Residues 111–130 (KERKKPGLKKARKASQFSKR) show a composition bias toward basic residues.

Belongs to the universal ribosomal protein uS9 family.

This chain is Small ribosomal subunit protein uS9, found in Levilactobacillus brevis (strain ATCC 367 / BCRC 12310 / CIP 105137 / JCM 1170 / LMG 11437 / NCIMB 947 / NCTC 947) (Lactobacillus brevis).